The chain runs to 65 residues: Small ribosomal subunit protein bS21 (65 aa).

Over residues 43-52 (EKKRVKEALA) the composition is skewed to basic and acidic residues. The disordered stretch occupies residues 43 to 65 (EKKRVKEALARKRSRKKARKEQD). The span at 53–65 (RKRSRKKARKEQD) shows a compositional bias: basic residues.

The protein belongs to the bacterial ribosomal protein bS21 family.

The sequence is that of Small ribosomal subunit protein bS21 from Koribacter versatilis (strain Ellin345).